The sequence spans 207 residues: Small ribosomal subunit protein uS4 (207 aa).

Residues 31–55 form a disordered region; that stretch reads KCKLDSKPGQHGRTSGARTSDYGTQ. Polar residues predominate over residues 42–53; it reads GRTSGARTSDYG. An S4 RNA-binding domain is found at 97–160; the sequence is SRLDNVVYRM…KKQARIIEAL (64 aa).

It belongs to the universal ribosomal protein uS4 family. In terms of assembly, part of the 30S ribosomal subunit. Contacts protein S5. The interaction surface between S4 and S5 is involved in control of translational fidelity.

In terms of biological role, one of the primary rRNA binding proteins, it binds directly to 16S rRNA where it nucleates assembly of the body of the 30S subunit. Its function is as follows. With S5 and S12 plays an important role in translational accuracy. This is Small ribosomal subunit protein uS4 from Burkholderia multivorans (strain ATCC 17616 / 249).